The primary structure comprises 339 residues: UDP-galactose transporter homolog 1 (339 aa).

Residues 1 to 4 (MAGS) lie on the Lumenal side of the membrane. A helical membrane pass occupies residues 5-25 (TSSLVICAIGIYATFLTWALV). Topologically, residues 26–42 (QEPLATRTWPNSMGKFQ) are cytoplasmic. The helical transmembrane segment at 43 to 63 (FPNVISLIQASVAMMMGYLYL) threads the bilayer. Topologically, residues 64-106 (NWKKVEYPPRKMIKDHWKQLMLISFTQSSSGPLATTSLKHVDY) are lumenal. Residues 107-127 (LTYMLAKSCKMIPVLLVHLLL) form a helical membrane-spanning segment. Topologically, residues 128–136 (YRTPIASQK) are cytoplasmic. Residues 137–157 (KVVALLVSLGVTIFTIGGNDG) traverse the membrane as a helical segment. Residues 158–174 (KKLKRSFNESGNDNKLQ) are Lumenal-facing. Asparagine 165 is a glycosylation site (N-linked (GlcNAc...) asparagine). The helical transmembrane segment at 175–192 (GFGLLFSSLFLDGLTNAT) threads the bilayer. Over 193-214 (QDKLLKANKAKEKGKQTLITGA) the chain is Cytoplasmic. Residues 215–235 (HLMFTLNLFVILWNILYFIVI) traverse the membrane as a helical segment. The Lumenal portion of the chain corresponds to 236–245 (DCKQWDNAVS). The helical transmembrane segment at 246–266 (VLTMDPQVWGYLMLYSFCGAM) threads the bilayer. Topologically, residues 267-280 (GQCFIFYTLEQFGS) are cytoplasmic. Residues 281-303 (LVLIMITVTRKMVSMILSIIVFG) form a helical membrane-spanning segment. The Lumenal segment spans residues 304–307 (KSVR). The helical transmembrane segment at 308-327 (FQQWVGMFIVFGGITWEALN) threads the bilayer. Residues 328-339 (KKKANIPKAKSA) lie on the Cytoplasmic side of the membrane.

The protein belongs to the nucleotide-sugar transporter family. SLC35B subfamily.

Its subcellular location is the endoplasmic reticulum membrane. May be involved in specific transport of UDP-Gal from the cytosol to the Golgi lumen. Involved in the maintenance of optimal conditions for the folding of secretory pathway proteins in the endoplasmic reticulum. Overexpression confers resistance to the immunosuppressive drug, leflunomide. The sequence is that of UDP-galactose transporter homolog 1 (HUT1) from Saccharomyces cerevisiae (strain ATCC 204508 / S288c) (Baker's yeast).